A 294-amino-acid polypeptide reads, in one-letter code: uncharacterized protein (294 aa).

The first 19 residues, 1-19 (MFKRSLFILLLLAASLVKA), serve as a signal peptide directing secretion.

This is an uncharacterized protein from Rickettsia felis (strain ATCC VR-1525 / URRWXCal2) (Rickettsia azadi).